Consider the following 301-residue polypeptide: NADH-cytochrome b5 reductase 3 (301 aa).

Glycine 2 carries N-myristoyl glycine lipidation. Residues 40–152 (DIKYPLRLID…RGPNGLLVYQ (113 aa)) form the FAD-binding FR-type domain. Lysine 42 bears the N6-acetyllysine mark. Tyrosine 43 is subject to Phosphotyrosine. Residue lysine 50 is modified to N6-acetyllysine. Residues arginine 92, proline 93, tyrosine 94, valine 109, lysine 111, and phenylalanine 114 each coordinate FAD. Lysine 120 is modified (N6-acetyllysine). FAD contacts are provided by lysine 126, methionine 127, serine 128, and threonine 185.

Belongs to the flavoprotein pyridine nucleotide cytochrome reductase family. As to quaternary structure, component of a complex composed of cytochrome b5, NADH-cytochrome b5 reductase (CYB5R3) and MTARC2. Interacts with MTLN; the interaction is required to maintain cellular lipid composition and leads to stimulation of mitochondrial respiratory complex I activity. The cofactor is FAD.

The protein localises to the endoplasmic reticulum membrane. Its subcellular location is the mitochondrion outer membrane. It catalyses the reaction 2 Fe(III)-[cytochrome b5] + NADH = 2 Fe(II)-[cytochrome b5] + NAD(+) + H(+). Its function is as follows. Catalyzes the reduction of two molecules of cytochrome b5 using NADH as the electron donor. This Bos taurus (Bovine) protein is NADH-cytochrome b5 reductase 3 (CYB5R3).